The sequence spans 146 residues: Large ribosomal subunit protein uL15 (146 aa).

The span at 1-13 (MKLHELKPAEGSR) shows a compositional bias: basic and acidic residues. The tract at residues 1–51 (MKLHELKPAEGSRKVRNRVGRGIGSGNGKTAGKGHKGQNARSGGGVRLGFE) is disordered. Composition is skewed to gly residues over residues 21 to 31 (RGIGSGNGKTA) and 42 to 51 (SGGGVRLGFE).

This sequence belongs to the universal ribosomal protein uL15 family. As to quaternary structure, part of the 50S ribosomal subunit.

Binds to the 23S rRNA. The protein is Large ribosomal subunit protein uL15 of Bacillus cereus (strain G9842).